We begin with the raw amino-acid sequence, 97 residues long: CRISPR-associated endoribonuclease Cas2 1 (97 aa).

D12 is a Mg(2+) binding site.

The protein belongs to the CRISPR-associated endoribonuclease Cas2 protein family. In terms of assembly, homodimer, forms a heterotetramer with a Cas1 homodimer. It depends on Mg(2+) as a cofactor.

Its function is as follows. CRISPR (clustered regularly interspaced short palindromic repeat) is an adaptive immune system that provides protection against mobile genetic elements (viruses, transposable elements and conjugative plasmids). CRISPR clusters contain sequences complementary to antecedent mobile elements and target invading nucleic acids. CRISPR clusters are transcribed and processed into CRISPR RNA (crRNA). Functions as a ssRNA-specific endoribonuclease. Involved in the integration of spacer DNA into the CRISPR cassette. This chain is CRISPR-associated endoribonuclease Cas2 1, found in Francisella tularensis subsp. novicida (strain U112).